The following is a 209-amino-acid chain: Protein GrpE (209 aa).

Residues 1 to 13 are compositionally biased toward polar residues; it reads MSNDSSKAKQNQV. The tract at residues 1–33 is disordered; the sequence is MSNDSSKAKQNQVDEAVEGEILTESEVETGNDE. The span at 15–31 shows a compositional bias: acidic residues; it reads EAVEGEILTESEVETGN.

It belongs to the GrpE family. In terms of assembly, homodimer.

It is found in the cytoplasm. In terms of biological role, participates actively in the response to hyperosmotic and heat shock by preventing the aggregation of stress-denatured proteins, in association with DnaK and GrpE. It is the nucleotide exchange factor for DnaK and may function as a thermosensor. Unfolded proteins bind initially to DnaJ; upon interaction with the DnaJ-bound protein, DnaK hydrolyzes its bound ATP, resulting in the formation of a stable complex. GrpE releases ADP from DnaK; ATP binding to DnaK triggers the release of the substrate protein, thus completing the reaction cycle. Several rounds of ATP-dependent interactions between DnaJ, DnaK and GrpE are required for fully efficient folding. In Shewanella woodyi (strain ATCC 51908 / MS32), this protein is Protein GrpE.